Consider the following 111-residue polypeptide: UPF0060 membrane protein XCC2880 (111 aa).

Transmembrane regions (helical) follow at residues 8–28 (LLLF…PYLW), 34–54 (SVWL…LLTL), 62–82 (VYAA…WWVD), and 91–111 (LLGA…PRSG).

The protein belongs to the UPF0060 family.

The protein resides in the cell inner membrane. This is UPF0060 membrane protein XCC2880 from Xanthomonas campestris pv. campestris (strain ATCC 33913 / DSM 3586 / NCPPB 528 / LMG 568 / P 25).